A 293-amino-acid polypeptide reads, in one-letter code: N-acetylneuraminate lyase (293 aa).

Ser48 and Ser49 together coordinate aceneuramate. Tyr137 serves as the catalytic Proton donor. The active-site Schiff-base intermediate with substrate is the Lys165. The aceneuramate site is built by Thr167, Gly189, Asp191, Glu192, and Ser208.

The protein belongs to the DapA family. NanA subfamily. Homotetramer.

It localises to the cytoplasm. It catalyses the reaction aceneuramate = aldehydo-N-acetyl-D-mannosamine + pyruvate. Its pathway is amino-sugar metabolism; N-acetylneuraminate degradation; D-fructose 6-phosphate from N-acetylneuraminate: step 1/5. In terms of biological role, catalyzes the reversible aldol cleavage of N-acetylneuraminic acid (sialic acid; Neu5Ac) to form pyruvate and N-acetylmannosamine (ManNAc) via a Schiff base intermediate. This is N-acetylneuraminate lyase from Staphylococcus aureus (strain Mu3 / ATCC 700698).